The chain runs to 903 residues: Protein translocase subunit SecA (903 aa).

ATP is bound by residues glutamine 89, 107 to 111, and aspartate 502; that span reads GEGKT. The Zn(2+) site is built by cysteine 887, cysteine 889, cysteine 898, and histidine 899.

Belongs to the SecA family. In terms of assembly, monomer and homodimer. Part of the essential Sec protein translocation apparatus which comprises SecA, SecYEG and auxiliary proteins SecDF-YajC and YidC. Requires Zn(2+) as cofactor.

The protein resides in the cell inner membrane. It localises to the cytoplasm. It carries out the reaction ATP + H2O + cellular proteinSide 1 = ADP + phosphate + cellular proteinSide 2.. Part of the Sec protein translocase complex. Interacts with the SecYEG preprotein conducting channel. Has a central role in coupling the hydrolysis of ATP to the transfer of proteins into and across the cell membrane, serving both as a receptor for the preprotein-SecB complex and as an ATP-driven molecular motor driving the stepwise translocation of polypeptide chains across the membrane. The sequence is that of Protein translocase subunit SecA from Jannaschia sp. (strain CCS1).